The following is an 813-amino-acid chain: Protein SBE22 (813 aa).

Disordered regions lie at residues 1–66, 107–240, and 331–359; these read MIRP…HGHA, EIFS…GEFG, and QKDSATNSSSTITERITPGENQSQNNRES. Over residues 56–66 the composition is skewed to basic and acidic residues; that stretch reads RPSDNLFHGHA. Residues 107-121 are compositionally biased toward low complexity; it reads EIFSTSSSDTQSNIS. Basic and acidic residues predominate over residues 127 to 138; the sequence is SEDHSFGMDKSV. Composition is skewed to polar residues over residues 139–160, 169–200, and 214–234; these read DNSSTNATLTNRSIENRSNGDS, VSVNRSTKSGNNPLQRTQSETISVNMSHNRSM, and KNSSIPNLRYNSQPQQDNRSV.

It belongs to the SBE2 family.

It localises to the cytoplasm. The protein resides in the golgi apparatus. Its function is as follows. With SBE2, is involved in cell wall integrity and polarity processes like bud growth. The polypeptide is Protein SBE22 (SBE22) (Candida glabrata (strain ATCC 2001 / BCRC 20586 / JCM 3761 / NBRC 0622 / NRRL Y-65 / CBS 138) (Yeast)).